A 297-amino-acid polypeptide reads, in one-letter code: UBX domain-containing protein 1 (297 aa).

At Ala2 the chain carries N-acetylalanine. The region spanning 2-42 (AELTALESLIEMGFPRGRAEKALALTGNQGIEAAMDWLMEH) is the UBA domain. A disordered region spans residues 38 to 212 (WLMEHEDDPD…QEPPTKREYD (175 aa)). The segment covering 42-52 (HEDDPDVDEPL) has biased composition (acidic residues). An interaction with BRCA1 region spans residues 43–297 (EDDPDVDEPL…VLIVAKKCPS (255 aa)). 2 stretches are compositionally biased toward basic and acidic residues: residues 86 to 122 (LTEE…EREK) and 137 to 177 (KLQE…ERAQ). A coiled-coil region spans residues 86-172 (LTEEERQEQT…RVREKIERDK (87 aa)). At Ser199 the chain carries Phosphoserine. A Phosphoserine; by MAPK12 modification is found at Ser200. Phosphothreonine occurs at positions 207 and 229. The 83-residue stretch at 209–291 (REYDQCRIQV…GLVPSAVLIV (83 aa)) folds into the UBX domain. Phosphoserine is present on Ser270.

In terms of assembly, component of a complex required to couple retrotranslocation, ubiquitination and deglycosylation composed of NGLY1, SAKS1, AMFR, VCP and RAD23B. Interacts with HOMER2. Interacts directly with VCP. Interacts with BRCA1 and BARD1; interaction takes place when BRCA1 is not autoubiquitinated bur is strongly enhanced in the presence of autoubiquitinated BRCA1.

Its subcellular location is the cytoplasm. Ubiquitin-binding protein that interacts with the BRCA1-BARD1 heterodimer, and regulates its activity. Specifically binds 'Lys-6'-linked polyubiquitin chains. Interaction with autoubiquitinated BRCA1, leads to inhibit the E3 ubiquitin-protein ligase activity of the BRCA1-BARD1 heterodimer. Component of a complex required to couple deglycosylation and proteasome-mediated degradation of misfolded proteins in the endoplasmic reticulum that are retrotranslocated in the cytosol. This is UBX domain-containing protein 1 (Ubxn1) from Rattus norvegicus (Rat).